Consider the following 241-residue polypeptide: Carboxy-S-adenosyl-L-methionine synthase (241 aa).

S-adenosyl-L-methionine contacts are provided by residues Tyr38, 63–65 (GCS), 88–89 (DN), 116–117 (DI), Asn131, and Arg198.

This sequence belongs to the class I-like SAM-binding methyltransferase superfamily. Cx-SAM synthase family. As to quaternary structure, homodimer.

The enzyme catalyses prephenate + S-adenosyl-L-methionine = carboxy-S-adenosyl-L-methionine + 3-phenylpyruvate + H2O. Functionally, catalyzes the conversion of S-adenosyl-L-methionine (SAM) to carboxy-S-adenosyl-L-methionine (Cx-SAM). The sequence is that of Carboxy-S-adenosyl-L-methionine synthase from Glaesserella parasuis serovar 5 (strain SH0165) (Haemophilus parasuis).